Reading from the N-terminus, the 858-residue chain is DNA mismatch repair protein MutS (858 aa).

600–607 (GPNMSGKS) contacts ATP.

It belongs to the DNA mismatch repair MutS family.

Its function is as follows. This protein is involved in the repair of mismatches in DNA. It is possible that it carries out the mismatch recognition step. This protein has a weak ATPase activity. The sequence is that of DNA mismatch repair protein MutS from Bacillus pumilus (strain SAFR-032).